The primary structure comprises 285 residues: GPN-loop GTPase 3 (285 aa).

GTP is bound at residue 13 to 18 (GSGKST). Positions 70-72 (GPN) match the Gly-Pro-Asn (GPN)-loop; involved in dimer interface motif. Residue 172 to 175 (TKID) participates in GTP binding. Residues 253 to 276 (GEDLEPKEPPLENDDDDDDDEGDE) are disordered. The segment covering 263–275 (LENDDDDDDDEGD) has biased composition (acidic residues).

This sequence belongs to the GPN-loop GTPase family. As to quaternary structure, heterodimer with gpn1. Binds to RNA polymerase II (RNAPII).

Functionally, small GTPase required for proper localization of RNA polymerase II (RNAPII). May act at an RNAP assembly step prior to nuclear import. The chain is GPN-loop GTPase 3 (gpn3) from Dictyostelium discoideum (Social amoeba).